The sequence spans 158 residues: Ribosome maturation factor RimP (158 aa).

This sequence belongs to the RimP family.

It localises to the cytoplasm. Functionally, required for maturation of 30S ribosomal subunits. This is Ribosome maturation factor RimP from Streptococcus suis (strain 98HAH33).